The sequence spans 547 residues: MTRLQRLFRIAWVFCRYRLDTFLPLSELPTPLKIFFLLAPWHLFPQPKLSRGDRLRLALEELGPVFVKFGQILSTRRDLLPDDMAESLKQLQDRVPPFPSEQARGIIEKSLGAPVSELFAEFSPDPMASASVAQVHAATLPNGQKVVVKVLRPGIEKVIRQDLGLMYLMAGLLEKYWSEGKRLHPVEVVADYDSTIHDELDLQREAANASQLRRNFENSPLIYIPFIDWDYTRKSVLVMERIHGIPIADVPALEKAGVNMRVLAEKGVEIFFTQVFRDSFFHADMHPGNIFVDVSNPADPKYIAIDFGIVGTLAPDDQSYLARNLLAFFRRDYRQVAQLHIQSGWVPPETRVNEFEAAIRTVCEPIFERPLKDISFGHFLLRLFQTARRFNMEVQPQLVLLQKTLLNVEGLGRQLYPDLDLWSTAQPFLEDWMRKRIGPSGLIKSLQNHLPSWLEQSPEMPQLVHDALLQIRSSGPTEAQNRATLALMKEQQLRSERRWRRGFIALVLAGAALVGSQPHAGQWLADLPVWSWALLAGAAGVMLRGSR.

The Protein kinase domain occupies 121–501 (EFSPDPMASA…QLRSERRWRR (381 aa)). Residues 127–135 (MASASVAQV) and Lys149 contribute to the ATP site. Residue Asp284 is the Proton acceptor of the active site. Helical transmembrane passes span 502 to 522 (GFIA…HAGQ) and 523 to 543 (WLAD…GVML).

This sequence belongs to the ABC1 family. UbiB subfamily.

The protein localises to the cell inner membrane. The protein operates within cofactor biosynthesis; ubiquinone biosynthesis [regulation]. Its function is as follows. Is probably a protein kinase regulator of UbiI activity which is involved in aerobic coenzyme Q (ubiquinone) biosynthesis. The sequence is that of Probable protein kinase UbiB from Marinobacter nauticus (strain ATCC 700491 / DSM 11845 / VT8) (Marinobacter aquaeolei).